The following is a 353-amino-acid chain: MSLLSETIARIGPLDDAAAAAAQARQDVLTKPQGALGRLEALSVQIAGITGNQRPRLTNPAVIVMAADHGVARRGVSAYPSEVTAQMVLNFLNGGAAINVLARHVGARVIVVDMGVAANLPSHPELINRKMGMGTADFSVEPAMSRTQAQQAVEAGIACANDAIDAGVDILATGDMGIGNTTASSAVVAAITGRPVADVTGRGAGVDDAGLARKIAVIEQALALHRPDPNDGLDVLAKVGGFEIGGLAGVMLGAAARRVPVVIDGFISGAAALIAWTLAPAVQPYLIAAHRSVERGHEAVFTRLDLVPLFDLGMRLGEGTGAVLGMSLCQAACKILDEMATFGEAGVSGKVEN.

Catalysis depends on glutamate 318, which acts as the Proton acceptor.

It belongs to the CobT family.

The enzyme catalyses 5,6-dimethylbenzimidazole + nicotinate beta-D-ribonucleotide = alpha-ribazole 5'-phosphate + nicotinate + H(+). Its pathway is nucleoside biosynthesis; alpha-ribazole biosynthesis; alpha-ribazole from 5,6-dimethylbenzimidazole: step 1/2. In terms of biological role, catalyzes the synthesis of alpha-ribazole-5'-phosphate from nicotinate mononucleotide (NAMN) and 5,6-dimethylbenzimidazole (DMB). In Roseiflexus sp. (strain RS-1), this protein is Nicotinate-nucleotide--dimethylbenzimidazole phosphoribosyltransferase.